Reading from the N-terminus, the 200-residue chain is dTTP/UTP pyrophosphatase (200 aa).

Asp72 (proton acceptor) is an active-site residue.

It belongs to the Maf family. YhdE subfamily. It depends on a divalent metal cation as a cofactor.

Its subcellular location is the cytoplasm. The enzyme catalyses dTTP + H2O = dTMP + diphosphate + H(+). It catalyses the reaction UTP + H2O = UMP + diphosphate + H(+). In terms of biological role, nucleoside triphosphate pyrophosphatase that hydrolyzes dTTP and UTP. May have a dual role in cell division arrest and in preventing the incorporation of modified nucleotides into cellular nucleic acids. In Pseudomonas syringae pv. syringae (strain B728a), this protein is dTTP/UTP pyrophosphatase.